A 217-amino-acid chain; its full sequence is GTP cyclohydrolase 1 (217 aa).

3 residues coordinate Zn(2+): cysteine 109, histidine 112, and cysteine 180.

It belongs to the GTP cyclohydrolase I family. Homomer.

It catalyses the reaction GTP + H2O = 7,8-dihydroneopterin 3'-triphosphate + formate + H(+). It functions in the pathway cofactor biosynthesis; 7,8-dihydroneopterin triphosphate biosynthesis; 7,8-dihydroneopterin triphosphate from GTP: step 1/1. In Aliivibrio salmonicida (strain LFI1238) (Vibrio salmonicida (strain LFI1238)), this protein is GTP cyclohydrolase 1.